We begin with the raw amino-acid sequence, 678 residues long: NADPH--cytochrome P450 reductase (678 aa).

Gly2 is subject to N-acetylglycine. Over 2–22 (GDSNVDTGTTTSEMVAEEVSL) the chain is Lumenal. The chain crosses the membrane as a helical span at residues 23-43 (FSATDMVLFSLIVGLLTYWFI). The Cytoplasmic portion of the chain corresponds to 44 to 678 (FRKKKDEVPE…KGRYSLDVWS (635 aa)). Ser63 is subject to Phosphoserine. The Flavodoxin-like domain occupies 80-224 (IIVFYGSQTG…DFITWREQFW (145 aa)). FMN contacts are provided by residues 86–91 (SQTGTA), 138–141 (ATYG), 173–182 (LGNKTYEHFN), and Asp208. One can recognise an FAD-binding FR-type domain in the interval 279–521 (KNPFLAVVTT…FVRKSQFRLP (243 aa)). An NADP(+)-binding site is contributed by Arg298. FAD contacts are provided by residues Arg424, 454 to 457 (RYYS), 472 to 474 (CAV), Tyr478, and 488 to 491 (GVAT). Residues Thr535, 596–597 (SR), 602–606 (KVYVQ), and Asp639 each bind NADP(+). Trp677 contributes to the FAD binding site.

Belongs to the NADPH--cytochrome P450 reductase family. This sequence in the N-terminal section; belongs to the flavodoxin family. The protein in the C-terminal section; belongs to the flavoprotein pyridine nucleotide cytochrome reductase family. Requires FAD as cofactor. FMN serves as cofactor.

The protein localises to the endoplasmic reticulum membrane. It catalyses the reaction 2 oxidized [cytochrome P450] + NADPH = 2 reduced [cytochrome P450] + NADP(+) + H(+). Functionally, this enzyme is required for electron transfer from NADP to cytochrome P450 in microsomes. It can also provide electron transfer to heme oxygenase and cytochrome B5. The chain is NADPH--cytochrome P450 reductase from Sus scrofa (Pig).